The chain runs to 149 residues: Oligosaccharyltransferase complex subunit ostc (149 aa).

Over 1–32 (MESLYRVPFTVLECPNLKLKKPSWLHMPSAMT) the chain is Cytoplasmic. The chain crosses the membrane as a helical span at residues 33–53 (VYAMVVVSYFLITGGIIYDVI). Over 54 to 83 (VEPPSVGSMTDEHGHQRPVAFLAYRVNGQY) the chain is Extracellular. Residues 84-104 (IMEGLASSFLFTMGGLGFIIL) traverse the membrane as a helical segment. Topologically, residues 105-117 (DRSNAPNIPKLNR) are cytoplasmic. Residues 118-138 (FLLLFIGFVCVLLSFFMARVF) form a helical membrane-spanning segment. The Extracellular portion of the chain corresponds to 139–149 (MRMKLPGYLMG).

The protein belongs to the OSTC family. As to quaternary structure, specific component of the STT3A-containing form of the oligosaccharyltransferase (OST) complex.

It localises to the membrane. Its pathway is protein modification; protein glycosylation. In terms of biological role, specific component of the STT3A-containing form of the oligosaccharyl transferase (OST) complex that catalyzes the initial transfer of a defined glycan (Glc(3)Man(9)GlcNAc(2) in eukaryotes) from the lipid carrier dolichol-pyrophosphate to an asparagine residue within an Asn-X-Ser/Thr consensus motif in nascent polypeptide chains, the first step in protein N-glycosylation. N-glycosylation occurs cotranslationally and the complex associates with the Sec61 complex at the channel-forming translocon complex that mediates protein translocation across the endoplasmic reticulum (ER). All subunits are required for a maximal enzyme activity. This Xenopus tropicalis (Western clawed frog) protein is Oligosaccharyltransferase complex subunit ostc.